The chain runs to 145 residues: Large ribosomal subunit protein bL9 (145 aa).

It belongs to the bacterial ribosomal protein bL9 family.

Binds to the 23S rRNA. The chain is Large ribosomal subunit protein bL9 from Mesomycoplasma hyopneumoniae (strain 7448) (Mycoplasma hyopneumoniae).